Reading from the N-terminus, the 160-residue chain is Protein max (160 aa).

Positions 1 to 13 are enriched in acidic residues; sequence MSDNDDIEVESDE. The tract at residues 1–40 is disordered; sequence MSDNDDIEVESDEEQPRFQSAADKRAHHNALERKRRDHIK. Ser2 is modified (N-acetylserine). A phosphoserine mark is found at Ser2 and Ser11. A bHLH domain is found at 23-74; sequence DKRAHHNALERKRRDHIKDSFHSLRDSVPSLQGEKASRAQILDKATEYIQYM. The span at 29–40 shows a compositional bias: basic and acidic residues; the sequence is NALERKRRDHIK. N6-acetyllysine is present on Lys66. Residues 81 to 102 form a leucine-zipper region; it reads HQQDIDDLKRQNALLEQQVRAL. The disordered stretch occupies residues 103–160; sequence EKARSSAQLQTNYPSSDNSLYTNAKGSTISAFDGGSDSSSESEPEEPQSRKKLRMEAS. Phosphoserine is present on Ser107. The segment covering 107 to 132 has biased composition (polar residues); sequence SSAQLQTNYPSSDNSLYTNAKGSTIS. Residues 152 to 156 carry the Nuclear localization signal motif; the sequence is RKKLR. Lys153 and Lys154 each carry N6-acetyllysine.

Belongs to the MAX family. Efficient DNA binding requires dimerization with another bHLH protein. Binds DNA as a heterodimer with MYC or MAD. Part of the E2F6.com-1 complex in G0 phase composed of E2F6, MGA, MAX, TFDP1, CBX3, BAT8, EUHMTASE1, RING1, RNF2, MBLR, L3MBTL2 and YAF2. Component of some MLL1/MLL complex, at least composed of the core components KMT2A/MLL1, ASH2L, HCFC1/HCF1, WDR5 and RBBP5, as well as the facultative components BACC1, CHD8, E2F6, HSP70, INO80C, KANSL1, LAS1L, MAX, MCRS1, MGA, MYST1/MOF, PELP1, PHF20, PRP31, RING2, RUVB1/TIP49A, RUVB2/TIP49B, SENP3, TAF1, TAF4, TAF6, TAF7, TAF9 and TEX10. Interacts with SPAG9. The heterodimer MYC:MAX interacts with ABI1; the interaction may enhance MYC:MAX transcriptional activity. In terms of processing, reversible lysine acetylation might regulate the nuclear-cytoplasmic shuttling of specific Max complexes. In terms of tissue distribution, high levels found in the brain, heart and lung while lower levels are seen in the liver, kidney and skeletal muscle.

Its subcellular location is the nucleus. The protein localises to the cell projection. It localises to the dendrite. Transcription regulator. Forms a sequence-specific DNA-binding protein complex with MYC or MAD which recognizes the core sequence 5'-CAC[GA]TG-3'. The MYC:MAX complex is a transcriptional activator, whereas the MAD:MAX complex is a repressor. May repress transcription via the recruitment of a chromatin remodeling complex containing H3 'Lys-9' histone methyltransferase activity. Represses MYC transcriptional activity from E-box elements. The sequence is that of Protein max from Homo sapiens (Human).